Here is a 604-residue protein sequence, read N- to C-terminus: Elongation factor 4 (604 aa).

The tr-type G domain occupies 8 to 190 (DKIRNFSIIA…AIVNRLPPPR (183 aa)). GTP contacts are provided by residues 20 to 25 (DHGKST) and 137 to 140 (NKID).

Belongs to the TRAFAC class translation factor GTPase superfamily. Classic translation factor GTPase family. LepA subfamily.

Its subcellular location is the cell inner membrane. The enzyme catalyses GTP + H2O = GDP + phosphate + H(+). In terms of biological role, required for accurate and efficient protein synthesis under certain stress conditions. May act as a fidelity factor of the translation reaction, by catalyzing a one-codon backward translocation of tRNAs on improperly translocated ribosomes. Back-translocation proceeds from a post-translocation (POST) complex to a pre-translocation (PRE) complex, thus giving elongation factor G a second chance to translocate the tRNAs correctly. Binds to ribosomes in a GTP-dependent manner. The sequence is that of Elongation factor 4 from Hyphomonas neptunium (strain ATCC 15444).